Here is a 228-residue protein sequence, read N- to C-terminus: Orotidine 5'-phosphate decarboxylase (228 aa).

Substrate-binding positions include Asp8, Lys30, 59–68 (DLKLHDIPNT), Thr118, Arg178, Gln187, Gly207, and Arg208. The active-site Proton donor is the Lys61.

It belongs to the OMP decarboxylase family. Type 1 subfamily. Homodimer.

It catalyses the reaction orotidine 5'-phosphate + H(+) = UMP + CO2. Its pathway is pyrimidine metabolism; UMP biosynthesis via de novo pathway; UMP from orotate: step 2/2. Functionally, catalyzes the decarboxylation of orotidine 5'-monophosphate (OMP) to uridine 5'-monophosphate (UMP). The sequence is that of Orotidine 5'-phosphate decarboxylase from Wolinella succinogenes (strain ATCC 29543 / DSM 1740 / CCUG 13145 / JCM 31913 / LMG 7466 / NCTC 11488 / FDC 602W) (Vibrio succinogenes).